The primary structure comprises 593 residues: Probable metalloprotease ARX1 (593 aa).

It belongs to the peptidase M24 family. In terms of assembly, component of the nucleoplasmic and cytoplasmic pre-60S ribosomal particles. Interacts directly with REI1.

The protein resides in the cytoplasm. The protein localises to the nucleus. Functionally, probable metalloprotease involved in proper assembly of pre-ribosomal particles during the biogenesis of the 60S ribosomal subunit. Accompanies the pre-60S particles to the cytoplasm. This chain is Probable metalloprotease ARX1 (ARX1), found in Saccharomyces cerevisiae (strain ATCC 204508 / S288c) (Baker's yeast).